We begin with the raw amino-acid sequence, 376 residues long: MCANIPEFDSFYENENINYNLESFAPLNCDVNSPFLPINNNDINVNAYGDENLTYSNFLLSYNDKLATTTAKNNSINNSNSNNNSNNNKNNNNNHNNNNLLGNDISQMAFLLDYPSTLNEPQFAVNCKDIYRKDISTPSSLVSSLPPAKFSLSLSNSPSPPPPSSSSLKHGEAIISNTSESSDIFADPNSFEKDTMPLTQELTLENLNNQLNYPDFTINAIEQDPAPSSFSSSSSSSESTVSSSRKRKPCHDSYTHSSPSSSESKKISDSRLSAEGLAKVLNLESPEEALKRERFILGIFQNELNYPLGYKTWIRDTTKEYRTKLINQLHERVKVKYPEYNQSILETIIRRGTYYMMQSRLRRERRMKLKERKRTT.

2 stretches are compositionally biased toward low complexity: residues 73–99 (NNSI…NNNN) and 228–243 (SSFS…TVSS). Disordered stretches follow at residues 73-100 (NNSI…NNNL) and 222-269 (EQDP…KISD).

This is an uncharacterized protein from Saccharomyces cerevisiae (strain ATCC 204508 / S288c) (Baker's yeast).